A 1104-amino-acid chain; its full sequence is Carbamoyl phosphate synthase large chain (1104 aa).

A carboxyphosphate synthetic domain region spans residues 1–402 (MPRRTDLKSV…ALQKALRSTE (402 aa)). ATP-binding residues include arginine 129, arginine 169, glycine 175, glycine 176, glutamate 208, isoleucine 210, glutamate 215, glycine 241, valine 242, histidine 243, glutamine 285, and glutamate 299. The 196-residue stretch at 133–328 (KGVVERCGAE…IAKIAARLAV (196 aa)) folds into the ATP-grasp 1 domain. Positions 285, 299, and 301 each coordinate Mg(2+). The Mn(2+) site is built by glutamine 285, glutamate 299, and asparagine 301. Residues 403–547 (KRGATFSWAG…YSSYDEEDET (145 aa)) are oligomerization domain. A carbamoyl phosphate synthetic domain region spans residues 548–948 (RPREKAAIVI…AFGKSQTAAY (401 aa)). The ATP-grasp 2 domain maps to 676-867 (GQVLERAGLV…LAKAAARLMA (192 aa)). Residues arginine 712, arginine 751, leucine 753, glutamate 758, glycine 783, isoleucine 784, histidine 785, serine 786, glutamine 826, and glutamate 838 each coordinate ATP. 3 residues coordinate Mg(2+): glutamine 826, glutamate 838, and asparagine 840. The Mn(2+) site is built by glutamine 826, glutamate 838, and asparagine 840. The MGS-like domain occupies 949–1099 (GGLPTAGTAF…QEHTARLNAA (151 aa)). Positions 949–1104 (GGLPTAGTAF…RLNAAWEGRA (156 aa)) are allosteric domain.

Belongs to the CarB family. In terms of assembly, composed of two chains; the small (or glutamine) chain promotes the hydrolysis of glutamine to ammonia, which is used by the large (or ammonia) chain to synthesize carbamoyl phosphate. Tetramer of heterodimers (alpha,beta)4. The cofactor is Mg(2+). It depends on Mn(2+) as a cofactor.

It carries out the reaction hydrogencarbonate + L-glutamine + 2 ATP + H2O = carbamoyl phosphate + L-glutamate + 2 ADP + phosphate + 2 H(+). It catalyses the reaction hydrogencarbonate + NH4(+) + 2 ATP = carbamoyl phosphate + 2 ADP + phosphate + 2 H(+). The protein operates within amino-acid biosynthesis; L-arginine biosynthesis; carbamoyl phosphate from bicarbonate: step 1/1. It participates in pyrimidine metabolism; UMP biosynthesis via de novo pathway; (S)-dihydroorotate from bicarbonate: step 1/3. Large subunit of the glutamine-dependent carbamoyl phosphate synthetase (CPSase). CPSase catalyzes the formation of carbamoyl phosphate from the ammonia moiety of glutamine, carbonate, and phosphate donated by ATP, constituting the first step of 2 biosynthetic pathways, one leading to arginine and/or urea and the other to pyrimidine nucleotides. The large subunit (synthetase) binds the substrates ammonia (free or transferred from glutamine from the small subunit), hydrogencarbonate and ATP and carries out an ATP-coupled ligase reaction, activating hydrogencarbonate by forming carboxy phosphate which reacts with ammonia to form carbamoyl phosphate. This is Carbamoyl phosphate synthase large chain from Kineococcus radiotolerans (strain ATCC BAA-149 / DSM 14245 / SRS30216).